The chain runs to 143 residues: Putative mediator of RNA polymerase II transcription subunit 11 (143 aa).

Residues 97-143 are a coiled coil; sequence ILSHLEDLNNIVENNQEKQEKEKQEKEKLEKEKLEKEKQQSNEMNID. The segment at 109 to 143 is disordered; the sequence is ENNQEKQEKEKQEKEKLEKEKLEKEKQQSNEMNID. Over residues 111–136 the composition is skewed to basic and acidic residues; sequence NQEKQEKEKQEKEKLEKEKLEKEKQQ.

Belongs to the Mediator complex subunit 11 family. In terms of assembly, component of the Mediator complex.

It localises to the nucleus. Its function is as follows. Component of the Mediator complex, a coactivator involved in the regulated transcription of nearly all RNA polymerase II-dependent genes. Mediator functions as a bridge to convey information from gene-specific regulatory proteins to the basal RNA polymerase II transcription machinery. Mediator is recruited to promoters by direct interactions with regulatory proteins and serves as a scaffold for the assembly of a functional pre-initiation complex with RNA polymerase II and the general transcription factors. The sequence is that of Putative mediator of RNA polymerase II transcription subunit 11 (med11) from Dictyostelium discoideum (Social amoeba).